A 332-amino-acid polypeptide reads, in one-letter code: Peroxidase C1C (332 aa).

The signal sequence occupies residues 1-9 (MLHASFSNA). Glutamine 10 is modified (pyrrolidone carboxylic acid). Cystine bridges form between cysteine 20–cysteine 100, cysteine 53–cysteine 58, cysteine 106–cysteine 310, and cysteine 186–cysteine 218. Residue asparagine 22 is glycosylated (N-linked (GlcNAc...) asparagine). Histidine 51 functions as the Proton acceptor in the catalytic mechanism. The Ca(2+) site is built by aspartate 52, valine 55, glycine 57, aspartate 59, and serine 61. An N-linked (GlcNAc...) asparagine glycan is attached at asparagine 66. Proline 148 provides a ligand contact to substrate. Residue histidine 179 coordinates heme b. Residue threonine 180 coordinates Ca(2+). Residues asparagine 195, asparagine 207, and asparagine 223 are each glycosylated (N-linked (GlcNAc...) asparagine). Ca(2+) is bound by residues aspartate 231, threonine 234, and aspartate 239. N-linked (GlcNAc...) asparagine glycosylation occurs at asparagine 264.

It belongs to the peroxidase family. Classical plant (class III) peroxidase subfamily. Ca(2+) serves as cofactor. Requires heme b as cofactor.

The protein localises to the secreted. It localises to the vacuole. The catalysed reaction is 2 a phenolic donor + H2O2 = 2 a phenolic radical donor + 2 H2O. Removal of H(2)O(2), oxidation of toxic reductants, biosynthesis and degradation of lignin, suberization, auxin catabolism, response to environmental stresses such as wounding, pathogen attack and oxidative stress. These functions might be dependent on each isozyme/isoform in each plant tissue. This chain is Peroxidase C1C (PRXC1C), found in Armoracia rusticana (Horseradish).